The following is a 322-amino-acid chain: Cysteine protease YopT (322 aa).

Residues cysteine 139, histidine 258, and aspartate 274 contribute to the active site.

The protein belongs to the peptidase C58 family. In terms of assembly, interacts with human ARHA.

The protein resides in the secreted. Cysteine protease, which is translocated into infected cells and plays a central role in pathogenesis by cleaving the C-terminus end of the human small GTPase RhoA/ARHA, a regulator of cytoskeleton. Once cleaved, ARHA loses its lipid modification, and is released from the cell membrane, leading to the subsequent disruption of actin cytoskeleton of the host cell. In Yersinia pestis, this protein is Cysteine protease YopT (yopT).